The primary structure comprises 471 residues: Methylenetetrahydrofolate--tRNA-(uracil-5-)-methyltransferase TrmFO (471 aa).

13–18 (GGGLAG) provides a ligand contact to FAD.

Belongs to the MnmG family. TrmFO subfamily. Requires FAD as cofactor.

It is found in the cytoplasm. The enzyme catalyses uridine(54) in tRNA + (6R)-5,10-methylene-5,6,7,8-tetrahydrofolate + NADH + H(+) = 5-methyluridine(54) in tRNA + (6S)-5,6,7,8-tetrahydrofolate + NAD(+). It catalyses the reaction uridine(54) in tRNA + (6R)-5,10-methylene-5,6,7,8-tetrahydrofolate + NADPH + H(+) = 5-methyluridine(54) in tRNA + (6S)-5,6,7,8-tetrahydrofolate + NADP(+). Catalyzes the folate-dependent formation of 5-methyl-uridine at position 54 (M-5-U54) in all tRNAs. This Azorhizobium caulinodans (strain ATCC 43989 / DSM 5975 / JCM 20966 / LMG 6465 / NBRC 14845 / NCIMB 13405 / ORS 571) protein is Methylenetetrahydrofolate--tRNA-(uracil-5-)-methyltransferase TrmFO.